A 373-amino-acid polypeptide reads, in one-letter code: P2Y purinoceptor 1 (373 aa).

Topologically, residues 1 to 51 (MTEVPWSVVPNGTDAAFLAGLGSLWGNSTVASTAAVSSSFQCALTKTGFQF) are extracellular. N-linked (GlcNAc...) asparagine glycans are attached at residues Asn-11 and Asn-27. Cystine bridges form between Cys-42-Cys-296 and Cys-124-Cys-202. Lys-46 is an ADP binding site. The helical transmembrane segment at 52–74 (YYLPAVYILVFIIGFLGNSVAIW) threads the bilayer. The Cytoplasmic portion of the chain corresponds to 75-87 (MFVFHMKPWSGIS). A helical membrane pass occupies residues 88 to 109 (VYMFNLALADFLYVLTLPALIF). Topologically, residues 110–125 (YYFNKTDWIFGDAMCK) are extracellular. N-linked (GlcNAc...) asparagine glycosylation occurs at Asn-113. A helical membrane pass occupies residues 126–147 (LQRFIFHVNLYGSILFLTCISA). Topologically, residues 148 to 166 (HRYSGVVYPLKSLGRLKKK) are cytoplasmic. Residues 167-188 (NAIYVSVLVWLIVVVAISPILF) form a helical membrane-spanning segment. At 189–214 (YSGTGTRKNKTVTCYDTTSNDYLRSY) the chain is on the extracellular side. A glycan (N-linked (GlcNAc...) asparagine) is linked at Asn-197. 203–205 (YDT) is a binding site for ADP. A helical transmembrane segment spans residues 215-237 (FIYSMCTTVAMFCIPLVLILGCY). Residues 238 to 260 (GLIVKALIYNDLDNSPLRRKSIY) are Cytoplasmic-facing. A helical transmembrane segment spans residues 261-284 (LVIIVLTVFAVSYIPFHVMKTMNL). ADP-binding positions include 283–287 (NLRAR), 303–306 (YATY), and Arg-310. The Extracellular segment spans residues 285 to 303 (RARLDFQTPEMCDFNDRVY). A helical membrane pass occupies residues 304–325 (ATYQVTRGLASLNSCVDPILYF). The Cytoplasmic portion of the chain corresponds to 326–373 (LAGDTFRRRLSRATRKASRRSEANLQSKSEEMTLNILSEFKQNGDTSL).

It belongs to the G-protein coupled receptor 1 family.

It localises to the cell membrane. Its function is as follows. Receptor for extracellular adenine nucleotides such as ADP. In platelets, binding to ADP leads to mobilization of intracellular calcium ions via activation of phospholipase C, a change in platelet shape, and ultimately platelet aggregation. This Mus musculus (Mouse) protein is P2Y purinoceptor 1 (P2ry1).